The primary structure comprises 82 residues: Putative membrane protein insertion efficiency factor (82 aa).

This sequence belongs to the UPF0161 family.

The protein resides in the cell inner membrane. Its function is as follows. Could be involved in insertion of integral membrane proteins into the membrane. This Aeromonas salmonicida (strain A449) protein is Putative membrane protein insertion efficiency factor.